Reading from the N-terminus, the 543-residue chain is Malate synthase (543 aa).

The protein belongs to the malate synthase family. In terms of assembly, homodimer.

The protein resides in the cytoplasm. It carries out the reaction glyoxylate + acetyl-CoA + H2O = (S)-malate + CoA + H(+). Its pathway is carbohydrate metabolism; glyoxylate cycle; (S)-malate from isocitrate: step 2/2. In Streptomyces arenae, this protein is Malate synthase (aceB).